The following is a 152-amino-acid chain: Protein Smg homolog (152 aa).

It belongs to the Smg family.

The sequence is that of Protein Smg homolog from Bordetella avium (strain 197N).